A 107-amino-acid polypeptide reads, in one-letter code: UPF0145 protein YbjQ (107 aa).

It belongs to the UPF0145 family.

The polypeptide is UPF0145 protein YbjQ (Salmonella dublin (strain CT_02021853)).